The primary structure comprises 101 residues: Small ribosomal subunit protein uS14 (101 aa).

The protein belongs to the universal ribosomal protein uS14 family. In terms of assembly, part of the 30S ribosomal subunit. Contacts proteins S3 and S10.

Functionally, binds 16S rRNA, required for the assembly of 30S particles and may also be responsible for determining the conformation of the 16S rRNA at the A site. The protein is Small ribosomal subunit protein uS14 of Chlamydia abortus (strain DSM 27085 / S26/3) (Chlamydophila abortus).